A 773-amino-acid polypeptide reads, in one-letter code: Phenylalanine--tRNA ligase beta subunit (773 aa).

The region spanning 39 to 150 (LKAPDKVVVG…GKLELGRPLN (112 aa)) is the tRNA-binding domain. Residues 391–467 (KELPIIPISI…RIIGIDNIAS (77 aa)) form the B5 domain. Mg(2+)-binding residues include Asp445, Asp451, Glu454, and Glu455. An FDX-ACB domain is found at 682 to 773 (SKFPAITRDL…TLKNLGLDLR (92 aa)).

It belongs to the phenylalanyl-tRNA synthetase beta subunit family. Type 1 subfamily. In terms of assembly, tetramer of two alpha and two beta subunits. Requires Mg(2+) as cofactor.

It localises to the cytoplasm. The catalysed reaction is tRNA(Phe) + L-phenylalanine + ATP = L-phenylalanyl-tRNA(Phe) + AMP + diphosphate + H(+). The sequence is that of Phenylalanine--tRNA ligase beta subunit from Campylobacter jejuni (strain RM1221).